The primary structure comprises 87 residues: Putative regulatory protein BH2513 (87 aa).

This sequence belongs to the RemA family.

This Halalkalibacterium halodurans (strain ATCC BAA-125 / DSM 18197 / FERM 7344 / JCM 9153 / C-125) (Bacillus halodurans) protein is Putative regulatory protein BH2513.